Reading from the N-terminus, the 125-residue chain is Probable growth factor FPV211 (125 aa).

The first 48 residues, 1-48, serve as a signal peptide directing secretion; that stretch reads MKEPLIEVKREYNLIKTLTGKKFVVSTSIVVVLLIINMIFYGIRIHEL. Positions 80–120 constitute an EGF-like domain; sequence LFEKCKSKFNNFCIYGECMNIINLDKKFCICNKGYTGNRCD. Disulfide bonds link cysteine 84–cysteine 97, cysteine 92–cysteine 108, and cysteine 110–cysteine 119.

It is found in the secreted. This chain is Probable growth factor FPV211, found in Vertebrata (FPV).